We begin with the raw amino-acid sequence, 454 residues long: tRNA modification GTPase MnmE (454 aa).

Arginine 23, glutamate 80, and lysine 120 together coordinate (6S)-5-formyl-5,6,7,8-tetrahydrofolate. In terms of domain architecture, TrmE-type G spans 216–377 (GMKVVIAGRP…LRNHLKQSMG (162 aa)). K(+) is bound at residue asparagine 226. GTP-binding positions include 226-231 (NAGKSS), 245-251 (TDIAGTT), 270-273 (DTAG), and 335-338 (NKAD). A Mg(2+)-binding site is contributed by serine 230. Positions 245, 247, and 250 each coordinate K(+). Residue threonine 251 coordinates Mg(2+). Lysine 454 contributes to the (6S)-5-formyl-5,6,7,8-tetrahydrofolate binding site.

It belongs to the TRAFAC class TrmE-Era-EngA-EngB-Septin-like GTPase superfamily. TrmE GTPase family. As to quaternary structure, homodimer. Heterotetramer of two MnmE and two MnmG subunits. It depends on K(+) as a cofactor.

The protein localises to the cytoplasm. In terms of biological role, exhibits a very high intrinsic GTPase hydrolysis rate. Involved in the addition of a carboxymethylaminomethyl (cmnm) group at the wobble position (U34) of certain tRNAs, forming tRNA-cmnm(5)s(2)U34. This chain is tRNA modification GTPase MnmE, found in Escherichia coli O157:H7.